The following is a 179-amino-acid chain: CDP-archaeol synthase (179 aa).

4 consecutive transmembrane segments (helical) span residues 53 to 73 (FVGGVAGGVLTANLQYAIEKL), 88 to 108 (FTLTFLLAFGAMFGDLCGSFI), 120 to 140 (FLIVDQLMFLLVALLIASLYP), and 145 to 165 (LFTAEIIALAVIITPALHMGI).

Belongs to the CDP-archaeol synthase family. Mg(2+) is required as a cofactor.

It localises to the cell membrane. The catalysed reaction is 2,3-bis-O-(geranylgeranyl)-sn-glycerol 1-phosphate + CTP + H(+) = CDP-2,3-bis-O-(geranylgeranyl)-sn-glycerol + diphosphate. Its pathway is membrane lipid metabolism; glycerophospholipid metabolism. Catalyzes the formation of CDP-2,3-bis-(O-geranylgeranyl)-sn-glycerol (CDP-archaeol) from 2,3-bis-(O-geranylgeranyl)-sn-glycerol 1-phosphate (DGGGP) and CTP. This reaction is the third ether-bond-formation step in the biosynthesis of archaeal membrane lipids. Can use CTP or dCTP, but not ATP, GTP or TTP. The chain is CDP-archaeol synthase from Archaeoglobus fulgidus (strain ATCC 49558 / DSM 4304 / JCM 9628 / NBRC 100126 / VC-16).